The following is a 514-amino-acid chain: Serine/threonine protein phosphatase PstP (514 aa).

Residues 1–302 (MARVTLVLRY…RPRWSGRRLA (302 aa)) are Cytoplasmic-facing. In terms of domain architecture, PPM-type phosphatase spans 9-238 (RYAARSDRGL…DNVTVVVADV (230 aa)). Residues Asp-38, Gly-39, Asp-118, Ser-160, Asp-191, and Asp-229 each coordinate Mn(2+). A helical transmembrane segment spans residues 303-323 (FVVALVTVLMTAGLLIGRAII). At 324–514 (RSNYYVADYA…QPGIDCRAAA (191 aa)) the chain is on the extracellular side. A disordered region spans residues 420–514 (LLPPCPAPRA…QPGIDCRAAA (95 aa)). Residues 440-480 (TTSETTEPNVTSSPASPSPTTSASAPTGTTPAIPTSASPAA) are compositionally biased toward low complexity.

The cofactor is Mn(2+).

Its subcellular location is the cell membrane. It carries out the reaction O-phospho-L-seryl-[protein] + H2O = L-seryl-[protein] + phosphate. It catalyses the reaction O-phospho-L-threonyl-[protein] + H2O = L-threonyl-[protein] + phosphate. Plays an important role in regulating cell division and growth by reversible phosphorylation signaling. May play important roles in regulating cellular metabolism and signaling pathways, which could mediate the growth and development of the cell. Plays a role in establishing and maintaining infection. In Mycobacterium tuberculosis (strain CDC 1551 / Oshkosh), this protein is Serine/threonine protein phosphatase PstP (pstP).